Here is an 83-residue protein sequence, read N- to C-terminus: Apolipoprotein C-I, acidic form (83 aa).

The N-terminal stretch at 1–26 (MRLFLSLPVLVVVLSIVLEGPAPAQG) is a signal peptide.

This sequence belongs to the apolipoprotein C1 family.

It localises to the secreted. The polypeptide is Apolipoprotein C-I, acidic form (APOC1A) (Pan paniscus (Pygmy chimpanzee)).